The chain runs to 382 residues: D-galactonate dehydratase (382 aa).

Aspartate 183 contacts Mg(2+). The active-site Proton donor is the histidine 185. Glutamate 209 and glutamate 235 together coordinate Mg(2+). Histidine 285 functions as the Proton acceptor in the catalytic mechanism.

The protein belongs to the mandelate racemase/muconate lactonizing enzyme family. GalD subfamily. Requires Mg(2+) as cofactor.

The catalysed reaction is D-galactonate = 2-dehydro-3-deoxy-D-galactonate + H2O. The protein operates within carbohydrate acid metabolism; D-galactonate degradation; D-glyceraldehyde 3-phosphate and pyruvate from D-galactonate: step 1/3. In terms of biological role, catalyzes the dehydration of D-galactonate to 2-keto-3-deoxy-D-galactonate. The polypeptide is D-galactonate dehydratase (Ralstonia pickettii (strain 12J)).